The following is a 432-amino-acid chain: Amino-acid acetyltransferase (432 aa).

In terms of domain architecture, N-acetyltransferase spans 286–425 (ERVREAAIED…ASLYNYQRNS (140 aa)).

It belongs to the acetyltransferase family. ArgA subfamily.

The protein resides in the cytoplasm. The catalysed reaction is L-glutamate + acetyl-CoA = N-acetyl-L-glutamate + CoA + H(+). It participates in amino-acid biosynthesis; L-arginine biosynthesis; N(2)-acetyl-L-ornithine from L-glutamate: step 1/4. The polypeptide is Amino-acid acetyltransferase (Pseudomonas fluorescens (strain ATCC BAA-477 / NRRL B-23932 / Pf-5)).